The sequence spans 642 residues: Threonine--tRNA ligase (642 aa).

The TGS domain maps to 1–63; it reads MSEIVVTLPD…TDDCELVIVT (63 aa). A catalytic region spans residues 242–533; the sequence is DHRKLGQELD…LIEHFDGNFP (292 aa). Zn(2+) contacts are provided by Cys334, His385, and His510.

This sequence belongs to the class-II aminoacyl-tRNA synthetase family. As to quaternary structure, homodimer. Requires Zn(2+) as cofactor.

It is found in the cytoplasm. The catalysed reaction is tRNA(Thr) + L-threonine + ATP = L-threonyl-tRNA(Thr) + AMP + diphosphate + H(+). Catalyzes the attachment of threonine to tRNA(Thr) in a two-step reaction: L-threonine is first activated by ATP to form Thr-AMP and then transferred to the acceptor end of tRNA(Thr). The sequence is that of Threonine--tRNA ligase from Natronomonas pharaonis (strain ATCC 35678 / DSM 2160 / CIP 103997 / JCM 8858 / NBRC 14720 / NCIMB 2260 / Gabara) (Halobacterium pharaonis).